The primary structure comprises 205 residues: Putative C-type lectin protein FPV001/FPV260 (205 aa).

The region spanning 84–187 (CPRDWISHNG…CSVRRYLVCK (104 aa)) is the C-type lectin domain.

This chain is Putative C-type lectin protein FPV001/FPV260, found in Fowlpox virus (strain NVSL) (FPV).